Consider the following 262-residue polypeptide: Cytochrome c oxidase subunit 3 (262 aa).

The next 6 membrane-spanning stretches (helical) occupy residues tyrosine 39 to tryptophan 59, glycine 83 to phenylalanine 103, valine 120 to alanine 140, glycine 163 to isoleucine 183, alanine 201 to leucine 221, and alanine 240 to tryptophan 260.

The protein belongs to the cytochrome c oxidase subunit 3 family. Component of the cytochrome c oxidase (complex IV, CIV), a multisubunit enzyme composed of a catalytic core of 3 subunits and several supernumerary subunits. The complex exists as a monomer or a dimer and forms supercomplexes (SCs) in the inner mitochondrial membrane with ubiquinol-cytochrome c oxidoreductase (cytochrome b-c1 complex, complex III, CIII).

It localises to the mitochondrion inner membrane. It catalyses the reaction 4 Fe(II)-[cytochrome c] + O2 + 8 H(+)(in) = 4 Fe(III)-[cytochrome c] + 2 H2O + 4 H(+)(out). Component of the cytochrome c oxidase, the last enzyme in the mitochondrial electron transport chain which drives oxidative phosphorylation. The respiratory chain contains 3 multisubunit complexes succinate dehydrogenase (complex II, CII), ubiquinol-cytochrome c oxidoreductase (cytochrome b-c1 complex, complex III, CIII) and cytochrome c oxidase (complex IV, CIV), that cooperate to transfer electrons derived from NADH and succinate to molecular oxygen, creating an electrochemical gradient over the inner membrane that drives transmembrane transport and the ATP synthase. Cytochrome c oxidase is the component of the respiratory chain that catalyzes the reduction of oxygen to water. Electrons originating from reduced cytochrome c in the intermembrane space (IMS) are transferred via the dinuclear copper A center (CU(A)) of subunit 2 and heme A of subunit 1 to the active site in subunit 1, a binuclear center (BNC) formed by heme A3 and copper B (CU(B)). The BNC reduces molecular oxygen to 2 water molecules using 4 electrons from cytochrome c in the IMS and 4 protons from the mitochondrial matrix. The sequence is that of Cytochrome c oxidase subunit 3 (COIII) from Anopheles gambiae (African malaria mosquito).